Consider the following 163-residue polypeptide: Protein-export protein SecB (163 aa).

The protein belongs to the SecB family. In terms of assembly, homotetramer, a dimer of dimers. One homotetramer interacts with 1 SecA dimer.

Its subcellular location is the cytoplasm. One of the proteins required for the normal export of preproteins out of the cell cytoplasm. It is a molecular chaperone that binds to a subset of precursor proteins, maintaining them in a translocation-competent state. It also specifically binds to its receptor SecA. The protein is Protein-export protein SecB of Azotobacter vinelandii (strain DJ / ATCC BAA-1303).